A 426-amino-acid polypeptide reads, in one-letter code: Squamosa promoter-binding-like protein 10 (426 aa).

Residues 178–255 (PPRCQAEGCK…AEHNRRRRKP (78 aa)) form an SBP-type zinc finger. Residues Cys-181, Cys-186, Cys-203, His-206, Cys-222, Cys-225, His-229, and Cys-241 each coordinate Zn(2+). The Bipartite nuclear localization signal signature appears at 238–254 (KRSCRKRLAEHNRRRRK). Composition is skewed to low complexity over residues 268–287 (DAAAAPVAAGKKPSGGAATS) and 401–417 (SDQNNDNSHNNGGNNNN). Disordered stretches follow at residues 268–290 (DAAAAPVAAGKKPSGGAATSYTG) and 392–426 (PSTATNGEVSDQNNDNSHNNGGNNNNMHLFEVDFM).

As to expression, expressed in stems, leaf sheaths, and young panicles.

It localises to the nucleus. Its function is as follows. Trans-acting factor that binds specifically to the consensus nucleotide sequence 5'-TNCGTACAA-3'. In Oryza sativa subsp. indica (Rice), this protein is Squamosa promoter-binding-like protein 10 (SPL10).